Here is a 58-residue protein sequence, read N- to C-terminus: Small integral membrane protein 11 (58 aa).

The chain crosses the membrane as a helical span at residues Pro10–Met32. Residues Gly29–Asn58 adopt a coiled-coil conformation.

In terms of tissue distribution, expressed in heart, spleen, liver, stomach, muscle, lung, testis, skin, PBL and bone marrow.

The protein localises to the membrane. The sequence is that of Small integral membrane protein 11 from Homo sapiens (Human).